The primary structure comprises 628 residues: CMP-5'-(3-aminopropyl)phosphonate synthase (628 aa).

The mobA-like NTP transferase stretch occupies residues 1-255 (MNENRTFATP…DPGDQRQADF (255 aa)). The segment at 278 to 628 (GVTDHALLYN…TTEGAGRADG (351 aa)) is decarboxylase. Lys466 bears the N6-(pyridoxal phosphate)lysine mark.

This sequence in the N-terminal section; belongs to the MobA family. It in the C-terminal section; belongs to the class-I pyridoxal-phosphate-dependent aminotransferase family. Mg(2+) is required as a cofactor. The cofactor is pyridoxal 5'-phosphate.

It catalyses the reaction 2-amino-4-phosphonobutanoate + CTP = CMP-5'-(3-amino-3-carboxypropyl)phosphonate + diphosphate. It carries out the reaction CMP-5'-(3-amino-3-carboxypropyl)phosphonate + H(+) = CMP-5'-(3-aminopropyl)phosphonate + CO2. It functions in the pathway antibiotic biosynthesis. In terms of biological role, bifunctional cytidylyltransferase/decarboxylase involved in the biosynthesis of the phosphonate antibiotic FR-900098, a potent antimalarial agent that acts as an inhibitor of 1-deoxy-D-xylulose 5-phosphate reductoisomerase (DXR), the first enzyme in the nonmevalonate pathway for isoprenoid biosynthesis. Catalyzes the condensation of 2-amino-4-phosphonobutyrate (2APn) and CTP to form CMP-5'-2APn and then decarboxylates CMP-5'-2APn to yield CMP-5'-(3-aminopropyl)phosphonate (CMP-5'-3APn). The polypeptide is CMP-5'-(3-aminopropyl)phosphonate synthase (Streptomyces rubellomurinus (strain ATCC 31215)).